We begin with the raw amino-acid sequence, 144 residues long: Phosphomevalonate dehydratase small subunit (144 aa).

The Proton acceptor role is filled by Ser-65.

The protein belongs to the AcnX type II small subunit family. In terms of assembly, heterodimer composed of a large subunit (PMDh-L) and a small subunit (PMDh-S).

The catalysed reaction is (R)-5-phosphomevalonate = (2E)-3-methyl-5-phosphooxypent-2-enoate + H2O. The protein operates within isoprenoid biosynthesis; isopentenyl diphosphate biosynthesis via mevalonate pathway. Component of a hydro-lyase that catalyzes the dehydration of mevalonate 5-phosphate (MVA5P) to form trans-anhydromevalonate 5-phosphate (tAHMP). Involved in the archaeal mevalonate (MVA) pathway, which provides fundamental precursors for isoprenoid biosynthesis, such as isopentenyl diphosphate (IPP) and dimethylallyl diphosphate (DMAPP). This Methanosarcina mazei (strain ATCC BAA-159 / DSM 3647 / Goe1 / Go1 / JCM 11833 / OCM 88) (Methanosarcina frisia) protein is Phosphomevalonate dehydratase small subunit.